Reading from the N-terminus, the 175-residue chain is Nucleoside-triphosphatase THEP1 (175 aa).

ATP-binding positions include glycine 15–threonine 22 and valine 106–glycine 113.

It belongs to the THEP1 NTPase family.

It carries out the reaction a ribonucleoside 5'-triphosphate + H2O = a ribonucleoside 5'-diphosphate + phosphate + H(+). Functionally, has nucleotide phosphatase activity towards ATP, GTP, CTP, TTP and UTP. May hydrolyze nucleoside diphosphates with lower efficiency. The protein is Nucleoside-triphosphatase THEP1 of Saccharolobus solfataricus (strain ATCC 35092 / DSM 1617 / JCM 11322 / P2) (Sulfolobus solfataricus).